Here is a 257-residue protein sequence, read N- to C-terminus: UPF0246 protein ECA3888 (257 aa).

Belongs to the UPF0246 family.

In Pectobacterium atrosepticum (strain SCRI 1043 / ATCC BAA-672) (Erwinia carotovora subsp. atroseptica), this protein is UPF0246 protein ECA3888.